Consider the following 350-residue polypeptide: ADP-ribosylhydrolase ARH3 (350 aa).

Residues E27, T57, D58, and D59 each coordinate Mg(2+). Substrate is bound at residue D58. Residues 127–133 (KGSYGNG), H163, L216, and I252 contribute to the substrate site. The Mg(2+) site is built by D295, D297, and T298.

Belongs to the ADP-ribosylglycohydrolase family. In terms of assembly, monomer. The cofactor is Mg(2+).

It localises to the nucleus. Its subcellular location is the cytoplasm. The protein localises to the chromosome. The protein resides in the mitochondrion matrix. It carries out the reaction [(1''-&gt;2')-ADP-alpha-D-ribose](n) + H2O = [(1''-&gt;2')-ADP-alpha-D-ribose](n-1) + ADP-D-ribose. The catalysed reaction is 1''-O-acetyl-ADP-alpha-D-ribose + H2O = ADP-D-ribose + acetate + H(+). It catalyses the reaction O-(ADP-D-ribosyl)-L-seryl-[protein] + H2O = ADP-D-ribose + L-seryl-[protein]. The enzyme catalyses alpha-NAD(+) + H2O = ADP-D-ribose + nicotinamide + H(+). With respect to regulation, the protein undergoes a dramatic conformational switch from closed to open states upon substrate-binding, which enables specific substrate recognition for the 1''-O-linkage. The glutamate flap (Glu-27) blocks substrate entrance to Mg(2+) in the unliganded closed state. In presence of substrate, Glu-27 is ejected from the active site: this closed-to-open transition significantly widens the substrate-binding channel and precisely positions the scissile 1''-O-linkage for cleavage while securing tightly 2'- and 3'-hydroxyls of ADP-ribose. In terms of biological role, ADP-ribosylhydrolase that preferentially hydrolyzes the scissile alpha-O-linkage attached to the anomeric C1'' position of ADP-ribose and acts on different substrates, such as proteins ADP-ribosylated on serine and threonine, free poly(ADP-ribose) and O-acetyl-ADP-D-ribose. Specifically acts as a serine mono-ADP-ribosylhydrolase by mediating the removal of mono-ADP-ribose attached to serine residues on proteins, thereby playing a key role in DNA damage response. Serine ADP-ribosylation of proteins constitutes the primary form of ADP-ribosylation of proteins in response to DNA damage. Does not hydrolyze ADP-ribosyl-arginine, -cysteine, -diphthamide, or -asparagine bonds. Also able to degrade protein free poly(ADP-ribose), which is synthesized in response to DNA damage: free poly(ADP-ribose) acts as a potent cell death signal and its degradation by ADPRHL2 protects cells from poly(ADP-ribose)-dependent cell death, a process named parthanatos. Also hydrolyzes free poly(ADP-ribose) in mitochondria. Specifically digests O-acetyl-ADP-D-ribose, a product of deacetylation reactions catalyzed by sirtuins. Specifically degrades 1''-O-acetyl-ADP-D-ribose isomer, rather than 2''-O-acetyl-ADP-D-ribose or 3''-O-acetyl-ADP-D-ribose isomers. This Xenopus tropicalis (Western clawed frog) protein is ADP-ribosylhydrolase ARH3 (adprs).